Reading from the N-terminus, the 140-residue chain is Protein ApaG (140 aa).

The ApaG domain occupies 13–137; it reads EARTRDIVVR…FSLHLPGAAM (125 aa).

The polypeptide is Protein ApaG (Caulobacter vibrioides (strain ATCC 19089 / CIP 103742 / CB 15) (Caulobacter crescentus)).